The chain runs to 552 residues: Macrophage colony-stimulating factor 1 (552 aa).

An N-terminal signal peptide occupies residues 1 to 32; it reads MTARGAAGRCPSSTWLGSRLLLVCLLMSRSIA. Residues 33 to 492 are Extracellular-facing; that stretch reads KEVSEHCSHM…EGSSDPQIPE (460 aa). Disulfide bonds link Cys-39-Cys-122, Cys-80-Cys-171, and Cys-134-Cys-178. Residues Asn-107, Asn-154, and Asn-172 are each glycosylated (N-linked (GlcNAc...) asparagine). Low complexity predominate over residues 197-207; sequence TPSSDPASASP. The disordered stretch occupies residues 197 to 293; the sequence is TPSSDPASAS…GGPVPGVEDI (97 aa). Residues 254 to 267 show a composition bias toward polar residues; that stretch reads PRSTCQTLESTEQP. Positions 268-278 are enriched in basic and acidic residues; the sequence is NHGDRLTEDSQ. O-linked (Xyl...) (chondroitin sulfate) serine glycosylation is present at Ser-308. 2 disordered regions span residues 321 to 412 and 439 to 465; these read KFSP…RVSN and GKRSTRDRRSPAELEGGSASEGAARPV. 3 stretches are compositionally biased toward basic and acidic residues: residues 350–364, 382–396, and 439–450; these read STEDQKPVDITDRPL, EKTDGTSTLREDHQE, and GKRSTRDRRSPA. Residue Thr-360 is glycosylated (O-linked (GalNAc...) threonine). The helical transmembrane segment at 493-515 threads the bilayer; the sequence is SVFHLLVPGIILVLLTVGGLLFY. Over 516–552 the chain is Cytoplasmic; that stretch reads KWKWRSHRDPQTLDSSVGRPEDSSLTQDEDRQVELPV. The segment at 525–552 is disordered; the sequence is PQTLDSSVGRPEDSSLTQDEDRQVELPV. Residues 543–552 are compositionally biased toward basic and acidic residues; that stretch reads DEDRQVELPV.

In terms of assembly, homodimer or heterodimer; disulfide-linked. Likely to exist in multiple forms: homodimer consisting of 2 identical 150-200 kDa proteoglycan subunits, heterodimer consisting of a 150-200 kDa proteoglycan subunit and a truncated 43 kDa subunit, and homodimer consisting of 2 identical 43 kDa subunits. Interacts with CSF1R. Post-translationally, N-glycosylated. O-glycosylated; contains chondroitin sulfate.

It is found in the cell membrane. The protein resides in the secreted. The protein localises to the extracellular space. Functionally, cytokine that plays an essential role in the regulation of survival, proliferation and differentiation of hematopoietic precursor cells, especially mononuclear phagocytes, such as macrophages and monocytes. Promotes the release of pro-inflammatory chemokines, and thereby plays an important role in innate immunity and in inflammatory processes. Plays an important role in the regulation of osteoclast proliferation and differentiation, the regulation of bone resorption, and is required for normal bone development. Required for normal male and female fertility. Promotes reorganization of the actin cytoskeleton, regulates formation of membrane ruffles, cell adhesion and cell migration. Plays a role in lipoprotein clearance. The polypeptide is Macrophage colony-stimulating factor 1 (Csf1) (Mus musculus (Mouse)).